We begin with the raw amino-acid sequence, 102 residues long: RNA-binding protein Hfq (102 aa).

Residues 9-68 (DPFLNALRRERVPVSIYLVNGIKLQGQIESFDQFVILLKNTVSQMVYKHAISTVVPSRPV) enclose the Sm domain. Residues 63 to 102 (VPSRPVSHHSNNAGGGASNNYHHGSNVQGSTAQQDSEETE) form a disordered region. Over residues 70–88 (HHSNNAGGGASNNYHHGSN) the composition is skewed to low complexity.

It belongs to the Hfq family. In terms of assembly, homohexamer.

In terms of biological role, RNA chaperone that binds small regulatory RNA (sRNAs) and mRNAs to facilitate mRNA translational regulation in response to envelope stress, environmental stress and changes in metabolite concentrations. Also binds with high specificity to tRNAs. The sequence is that of RNA-binding protein Hfq from Salmonella choleraesuis (strain SC-B67).